Here is a 718-residue protein sequence, read N- to C-terminus: K(+)-insensitive pyrophosphate-energized proton pump (718 aa).

6 consecutive transmembrane segments (helical) span residues 6–26, 61–81, 83–103, 112–132, 133–153, and 168–188; these read AVLVLVIACGVLSVLFAIWAI, IAIVGIVVFLLAWYLLSLNAA, GFLIGAVLSGVTGFIGMHVSV, AASLSLAGGLELAFKSGAITG, LLVAGLALLGVSVYYFVLTVW, and VSLGFGASLISIFARLGGGIF. Residue lysine 190 coordinates substrate. Positions 193, 197, 220, and 223 each coordinate Mg(2+). 6 helical membrane passes run 235 to 255, 265 to 285, 300 to 320, 335 to 355, 385 to 405, and 413 to 433; these read LFETYAVTVVATMVLGAIFFH, LYPLMICGACVITSIAGTFFV, GLIATGLLSIVGLGVANTLTV, GTNLFVCGLIGLIVTGLIVVI, GLAVSLESTALPAIVIVGGII, and LFGTAIAVTAMLGIAGMIVAL. Aspartate 441 is a Mg(2+) binding site. The next 4 helical transmembrane spans lie at 472–492, 524–544, 593–613, and 620–640; these read AVTKGYAIGSAGLGALVLFAA, YVVAGLIFGGLIPYLFGGMAM, IIPSLLPVLAPIVVYFGVLLI, and AFAALGASLLGVIINGLFVAI. Residues aspartate 650, aspartate 682, and aspartate 686 each coordinate Ca(2+). Lysine 689 serves as a coordination point for substrate. A helical transmembrane segment spans residues 695 to 715; it reads AVNPAIKITNIVALLLLAVLA.

This sequence belongs to the H(+)-translocating pyrophosphatase (TC 3.A.10) family. K(+)-insensitive subfamily. Homodimer. Requires Mg(2+) as cofactor.

The protein localises to the cell inner membrane. It catalyses the reaction diphosphate + H2O + H(+)(in) = 2 phosphate + 2 H(+)(out). Its function is as follows. Proton pump that utilizes the energy of pyrophosphate hydrolysis as the driving force for proton movement across the membrane. Generates a proton motive force. This Brucella melitensis biotype 1 (strain ATCC 23456 / CCUG 17765 / NCTC 10094 / 16M) protein is K(+)-insensitive pyrophosphate-energized proton pump.